The following is a 255-amino-acid chain: uncharacterized protein (255 aa).

2 residues coordinate [4Fe-4S] cluster: C122 and C160.

Homodimer. [4Fe-4S] cluster serves as cofactor.

This is an uncharacterized protein from Escherichia coli (strain K12).